Here is a 33-residue protein sequence, read N- to C-terminus: Photosystem II reaction center protein Psb30 (33 aa).

Residues 5–25 (VVVQLGSLSLIVLAGPIIVLL) form a helical membrane-spanning segment.

Belongs to the Psb30/Ycf12 family. In terms of assembly, PSII is composed of 1 copy each of membrane proteins PsbA, PsbB, PsbC, PsbD, PsbE, PsbF, PsbH, PsbI, PsbJ, PsbK, PsbL, PsbM, PsbT, PsbX, PsbY, PsbZ, Psb30/Ycf12, peripheral proteins of the oxygen-evolving complex and a large number of cofactors. It forms dimeric complexes.

The protein resides in the plastid. Its subcellular location is the chloroplast thylakoid membrane. Its function is as follows. A core subunit of photosystem II (PSII), probably helps stabilize the reaction center. The polypeptide is Photosystem II reaction center protein Psb30 (Mesostigma viride (Green alga)).